The following is a 692-amino-acid chain: MNKKLEQLEKFKTNDKNPVYSTTNTGVSLSDDANSLKAGPRGPTLLEDFVLREKITHFDHERIPERIVHARGTGAHGYFLSYKDHSKLTKADFLSKQDKKTPVFIRISTVQGPRGSADTVRDVHGFAVKFYTDEGNYDLVGNNMPVFFIQDASSFPDFVHAVKMEPQNEMPTGGSAHDTFYDFCGLKPESAHSVLWVMSDRGIPISLRHQQGFGVHSYRFINQEGKSTFVKLHWKPLSGTCSLLWDEAQKIAGKDCDYHRRRFWEDIESGDFPQWELGAQLLDEDLQKKFDFDILDPTKLIPEELTPVIPLGRMVIDRNPDNFFAETEQVAFCVSHVVPGIDFSNDPLLQGRIFSYLDTQLSRLGGPNFNEIPINRPVCPFANNQRDGIHRMTINKGGASYFPNSIDKGYPLLKEPSANKGGFRPYPENISGTKSYDRSETFEDHFSQATMFWNSMSQHEKNHIIAAYTFEISKCSRPEVRTRYVNNILVNIDSVLAEKVAKNLGVKIEPTSTKPIKKIMVKPSPALSQPNLLSGDIVSRRISVIIEKGVDYDDVINFKDDMEKRGAMVMLVSSTLAQVECSGGEMLSPKGTIIGNPSIFFDAVYVPKSTEEATKILSDDGNFLHYILEAFKHLKTIAFGGSVSVIKELLRLPQDHGLLLGNGYKDITEQFFYSLAHHRVWERESKVSKIPA.

Active-site residues include His-69 and Asn-142. Heme is bound at residue Tyr-356.

This sequence belongs to the catalase family. Heme serves as cofactor.

The protein resides in the cytoplasm. The enzyme catalyses 2 H2O2 = O2 + 2 H2O. In terms of biological role, occurs in almost all aerobically respiring organisms and serves to protect cells from the toxic effects of hydrogen peroxide. Its accumulation in prespore cells affords the spores protection from oxidation during prolonged dormancy. Required for normal developmental timing, possibly through a regulatory role in differentiation and morphogenesis. This Dictyostelium discoideum (Social amoeba) protein is Catalase-B (catB).